The chain runs to 257 residues: Membrane protein insertase YidC 1 (257 aa).

Positions 1 to 20 are cleaved as a signal peptide; it reads MYRKFGMAAMLVSILLLMTG. The N-palmitoyl cysteine moiety is linked to residue C21. Residue C21 is the site of S-diacylglycerol cysteine attachment. The next 5 helical transmembrane spans lie at 35–55, 59–79, 129–149, 160–180, and 205–225; these read IWDS…ANAF, FGLA…PLMI, LAGC…YHAI, FLWF…AGIT, and VMIL…WVIG.

It belongs to the OXA1/ALB3/YidC family. Type 2 subfamily.

The protein localises to the cell membrane. Its function is as follows. Required for the insertion and/or proper folding and/or complex formation of integral membrane proteins into the membrane. Involved in integration of membrane proteins that insert both dependently and independently of the Sec translocase complex, as well as at least some lipoproteins. The sequence is that of Membrane protein insertase YidC 1 from Halalkalibacterium halodurans (strain ATCC BAA-125 / DSM 18197 / FERM 7344 / JCM 9153 / C-125) (Bacillus halodurans).